Here is a 303-residue protein sequence, read N- to C-terminus: Protoheme IX farnesyltransferase (303 aa).

6 helical membrane passes run 25 to 45, 54 to 74, 118 to 138, 166 to 186, 230 to 250, and 280 to 300; these read MGLV…AIVM, IPQI…ACAL, CLFL…VGYV, IGWV…FLVV, LVLL…FVVI, and FVYS…VSLI.

It belongs to the UbiA prenyltransferase family. Protoheme IX farnesyltransferase subfamily. In terms of assembly, interacts with CtaA.

Its subcellular location is the cell membrane. The enzyme catalyses heme b + (2E,6E)-farnesyl diphosphate + H2O = Fe(II)-heme o + diphosphate. The protein operates within porphyrin-containing compound metabolism; heme O biosynthesis; heme O from protoheme: step 1/1. Functionally, converts heme B (protoheme IX) to heme O by substitution of the vinyl group on carbon 2 of heme B porphyrin ring with a hydroxyethyl farnesyl side group. This Staphylococcus epidermidis (strain ATCC 35984 / DSM 28319 / BCRC 17069 / CCUG 31568 / BM 3577 / RP62A) protein is Protoheme IX farnesyltransferase.